A 136-amino-acid polypeptide reads, in one-letter code: Large ribosomal subunit protein bL17 (136 aa).

The protein belongs to the bacterial ribosomal protein bL17 family. In terms of assembly, part of the 50S ribosomal subunit. Contacts protein L32.

This is Large ribosomal subunit protein bL17 from Rickettsia peacockii (strain Rustic).